We begin with the raw amino-acid sequence, 240 residues long: Ribonuclease 3 (240 aa).

The RNase III domain maps to 4–134 (SRQPLLDALG…LLGAIYLQHG (131 aa)). Residue Glu-44 coordinates Mg(2+). Residue Asp-48 is part of the active site. Residues Asp-120 and Glu-123 each coordinate Mg(2+). The active site involves Glu-123. One can recognise a DRBM domain in the interval 161-229 (DWKTSLQELT…AAAAWKALEV (69 aa)).

Belongs to the ribonuclease III family. Homodimer. Mg(2+) serves as cofactor.

Its subcellular location is the cytoplasm. It carries out the reaction Endonucleolytic cleavage to 5'-phosphomonoester.. Its function is as follows. Digests double-stranded RNA. Involved in the processing of primary rRNA transcript to yield the immediate precursors to the large and small rRNAs (23S and 16S). Processes some mRNAs, and tRNAs when they are encoded in the rRNA operon. Processes pre-crRNA and tracrRNA of type II CRISPR loci if present in the organism. The chain is Ribonuclease 3 from Mycobacterium bovis (strain ATCC BAA-935 / AF2122/97).